The primary structure comprises 251 residues: Cell division protein ZapD (251 aa).

Belongs to the ZapD family. Interacts with FtsZ.

The protein localises to the cytoplasm. Its function is as follows. Cell division factor that enhances FtsZ-ring assembly. Directly interacts with FtsZ and promotes bundling of FtsZ protofilaments, with a reduction in FtsZ GTPase activity. In Paraburkholderia phytofirmans (strain DSM 17436 / LMG 22146 / PsJN) (Burkholderia phytofirmans), this protein is Cell division protein ZapD.